A 289-amino-acid polypeptide reads, in one-letter code: Elongation factor Ts (289 aa).

Residues 80–83 (TDFV) are involved in Mg(2+) ion dislocation from EF-Tu.

This sequence belongs to the EF-Ts family.

It is found in the cytoplasm. Functionally, associates with the EF-Tu.GDP complex and induces the exchange of GDP to GTP. It remains bound to the aminoacyl-tRNA.EF-Tu.GTP complex up to the GTP hydrolysis stage on the ribosome. This chain is Elongation factor Ts, found in Francisella tularensis subsp. tularensis (strain FSC 198).